The following is a 439-amino-acid chain: Protein ABHD8 (439 aa).

Disordered stretches follow at residues 54 to 75 (HAGP…PGVK) and 122 to 148 (ELAE…RPKR). Over residues 58–67 (APIPTPPPPP) the composition is skewed to pro residues. Basic residues predominate over residues 138–148 (GRRRRPRRPKR). The AB hydrolase-1 domain occupies 169-271 (VLFFIHGVGG…HKVIMINGGG (103 aa)). Catalysis depends on charge relay system residues Ser-244, Asp-362, and His-390. Residues 415–439 (EAEPKLEPKPKPQLLQPEPAPGEEK) are disordered.

The protein belongs to the AB hydrolase superfamily. As to quaternary structure, interacts with NLRP3 (via NACHT and LLR domains); this interaction is enhanced in the presence of NLRP3 inflammasome inducers, such as ATP, nigericin, silica, or alum. Interacts with ZDHHC12.

It localises to the cytoplasm. In terms of biological role, negatively regulates NLRP3-driven inflammation. Promotes NLRP3 degradation through the chaperone-mediated autophagy (CMA) pathway, hence attenuating inflammasome activation and IL1B secretion. Acts by recruiting palmitoyltransferase ZDHHC12 to NLRP3, facilitating NLRP3 palmitoylation and subsequent degradation. The polypeptide is Protein ABHD8 (Mus musculus (Mouse)).